The sequence spans 809 residues: MSRFFAASYEYDSASSSSEEDLLSSSEEELLSSSSLSEEESDDSFFNDSESESDFDSDDSDAKPYGPDWFKKQEFRRGGGGGNKFLKGASYSDSDESDEASKKVVKSAKEKLLDEMQTSSGKIDAAELTNDWITILNEFDSVTRLLTRAQQQNFGTPNIFVKVVAQVEDAVAASQEEINNKAVAKAFNTAKQRVKKISREHQTLLAKYREDPESFEKETSVEVDATPELAQFAVGKKTTDLSSIATTSSETGFFPALSIVLDSRGKKNIDQQALAQSMDDLLQTTKTPYEKIIAYLTLIPIRLDSSTNLSYQPIDQWKATYNDVSSLLSILDENINTYQVSELAPFNDSLENEPEANEKGVKTILGSILSFVDRLDDEFTKSLLNTDPHSSDYLIRLRDEQAIYNLILRTQLYLEATLPEDRQIDLLSRIFVRRLNHIYYKSNELIRIMEVAAWKVAPSSYTSKLTPYDGAVSDSYLSGVISTLTDALSKQQNQSLRKRAVLYNVYYTALNKEFQVAKDMLIESKVQSFINKSDPSLQILFNRVVVQLGLSAFKLCLIEECHQILNDLLASSHLREILGQQTLQRVTAHSNSSNADEREKLCLPFHEHINLDLIDVVFMTCSLLIEIPQMTAFYSGIKIKKIPYSQKSIRRALEHYEKSSFQGPPETLRDYILHSAKEMQKGNWKKSFELLKSIQAWALLPNSASVLDNLAERLQVESLKTYFFTNKRFYSKLSMKKLSDLFNLPEDKIVESLQAVITEYEIDASFNEDKSVLSIAKGAEITKLEEVASKLNKEVKITKERLHPSRGRR.

The segment at 1–102 (MSRFFAASYE…DSDESDEASK (102 aa)) is disordered. Acidic residues-rich tracts occupy residues 18–30 (SEEDLLSSSEEEL) and 37–59 (SEEESDDSFFNDSESESDFDSDD). Residues 605 to 780 (FHEHINLDLI…SVLSIAKGAE (176 aa)) form the PCI domain.

This sequence belongs to the eIF-3 subunit C family. Component of the eukaryotic translation initiation factor 3 (eIF-3) complex.

It localises to the cytoplasm. Component of the eukaryotic translation initiation factor 3 (eIF-3) complex, which is involved in protein synthesis of a specialized repertoire of mRNAs and, together with other initiation factors, stimulates binding of mRNA and methionyl-tRNAi to the 40S ribosome. The eIF-3 complex specifically targets and initiates translation of a subset of mRNAs involved in cell proliferation. In Vanderwaltozyma polyspora (strain ATCC 22028 / DSM 70294 / BCRC 21397 / CBS 2163 / NBRC 10782 / NRRL Y-8283 / UCD 57-17) (Kluyveromyces polysporus), this protein is Eukaryotic translation initiation factor 3 subunit C.